The sequence spans 156 residues: MPRKGPAPRRPLVADPVYNSPLVTQLVNKILLRGKRQLAETLVYAALEGCREKSGTDPVVTLKRAMDNVKPTLEVRSRRVGGATYQVPVEVRPARATTLGLRWLVTYARARREKTMVERLMNELLDASNGLGAAVKRREDTHKMAESNKAFAHYRW.

The protein belongs to the universal ribosomal protein uS7 family. As to quaternary structure, part of the 30S ribosomal subunit. Contacts proteins S9 and S11.

In terms of biological role, one of the primary rRNA binding proteins, it binds directly to 16S rRNA where it nucleates assembly of the head domain of the 30S subunit. Is located at the subunit interface close to the decoding center, probably blocks exit of the E-site tRNA. This chain is Small ribosomal subunit protein uS7, found in Salinispora tropica (strain ATCC BAA-916 / DSM 44818 / JCM 13857 / NBRC 105044 / CNB-440).